The chain runs to 382 residues: Protein delta homolog 2 (382 aa).

The N-terminal stretch at 1–26 (MPSGCRCLNLVCLLCILGATSQPARA) is a signal peptide. EGF-like domains follow at residues 27–58 (DDCS…LHCE), 62–89 (RMPG…KFCD), 91–129 (DEHI…RGCE), and 131–172 (KAGP…AHCE). Residues 27 to 305 (DDCSSHCDLA…RQESGLGESS (279 aa)) lie on the Extracellular side of the membrane. 17 cysteine pairs are disulfide-bonded: cysteine 29–cysteine 40, cysteine 33–cysteine 46, cysteine 48–cysteine 57, cysteine 66–cysteine 71, cysteine 79–cysteine 88, cysteine 95–cysteine 107, cysteine 101–cysteine 117, cysteine 119–cysteine 128, cysteine 135–cysteine 148, cysteine 142–cysteine 160, cysteine 162–cysteine 171, cysteine 178–cysteine 189, cysteine 183–cysteine 198, cysteine 200–cysteine 209, cysteine 216–cysteine 227, cysteine 221–cysteine 236, and cysteine 238–cysteine 247. N-linked (GlcNAc...) asparagine glycosylation is present at asparagine 157. Residues 174–210 (NVDDCLMRPCANGATCIDGINRFSCLCPEGFAGRFCT) enclose the EGF-like 5; calcium-binding domain. In terms of domain architecture, EGF-like 6; calcium-binding spans 212–248 (NLDDCASRPCQRGARCRDRVHDFDCLCPSGYGGKTCE). Residues 306–326 (LVALVVFGSLTAALVLATVLL) traverse the membrane as a helical segment. Residues 327 to 382 (TLRAWRRGICPTGPCCYPAPHYAPARQDQECQVSMLPAGFPLSPDLPPEPGKTTAL) are Cytoplasmic-facing.

Detected in a number of tissues including lung, brain, adrenal gland, testis, adult liver, placenta, ovary and thymus. Not detected in fetal liver or in adult spleen, muscle and heart.

It is found in the membrane. Its function is as follows. Regulates adipogenesis. The sequence is that of Protein delta homolog 2 (Dlk2) from Mus musculus (Mouse).